The chain runs to 68 residues: Tetrahydromethanopterin S-methyltransferase subunit F (68 aa).

Residues 45–65 traverse the membrane as a helical segment; the sequence is IAIGFLLAVLLVGVPAMMSIL.

Belongs to the MtrF family. In terms of assembly, the complex is composed of 8 subunits; MtrA, MtrB, MtrC, MtrD, MtrE, MtrF, MtrG and MtrH.

It is found in the cell membrane. It catalyses the reaction 5-methyl-5,6,7,8-tetrahydromethanopterin + coenzyme M + 2 Na(+)(in) = 5,6,7,8-tetrahydromethanopterin + methyl-coenzyme M + 2 Na(+)(out). Its pathway is one-carbon metabolism; methanogenesis from CO(2); methyl-coenzyme M from 5,10-methylene-5,6,7,8-tetrahydromethanopterin: step 2/2. Its function is as follows. Part of a complex that catalyzes the formation of methyl-coenzyme M and tetrahydromethanopterin from coenzyme M and methyl-tetrahydromethanopterin. This is an energy-conserving, sodium-ion translocating step. This is Tetrahydromethanopterin S-methyltransferase subunit F (mtrF) from Methanothermobacter marburgensis (strain ATCC BAA-927 / DSM 2133 / JCM 14651 / NBRC 100331 / OCM 82 / Marburg) (Methanobacterium thermoautotrophicum).